The primary structure comprises 338 residues: Mitoferrin-1 (338 aa).

The tract at residues 1–37 (MELRRGGVGNQAAGRRMDGDCRDGGCGSKDAGSEDYE) is disordered. Solcar repeat units lie at residues 43–131 (ASVS…MKRT), 141–225 (NSHL…LQEQ), and 232–326 (YNPQ…FKYI). Transmembrane regions (helical) follow at residues 45–64 (VSTHMTAGAMAGILEHSIMY), 106–125 (GLNVMMMGAGPAHAMYFACY), 143–162 (HLANGVAGSMATLLHDAVMN), 200–219 (SYTTQLTMNIPFQSIHFITY), 234–253 (PQSHIISGGLAGALAAAATT), and 301–320 (GIQARVIYQMPSTAISWSVY).

The protein belongs to the mitochondrial carrier (TC 2.A.29) family. Interacts with ACB10; this interaction stabilizes SLC25A37 and enhances the function of SLC25A37 to import mitochondrial iron during erythroid differentiation. Highly expressed in hematopoietic organs, fetal liver, bone marrow and spleen.

Its subcellular location is the mitochondrion inner membrane. It catalyses the reaction Fe(2+)(in) = Fe(2+)(out). Mitochondrial iron transporter that specifically mediates iron uptake in developing erythroid cells, thereby playing an essential role in heme biosynthesis. The polypeptide is Mitoferrin-1 (Slc25a37) (Mus musculus (Mouse)).